The sequence spans 143 residues: 3-hydroxyacyl-[acyl-carrier-protein] dehydratase FabZ (143 aa).

The active site involves His-48.

The protein belongs to the thioester dehydratase family. FabZ subfamily.

It is found in the cytoplasm. The catalysed reaction is a (3R)-hydroxyacyl-[ACP] = a (2E)-enoyl-[ACP] + H2O. Its function is as follows. Involved in unsaturated fatty acids biosynthesis. Catalyzes the dehydration of short chain beta-hydroxyacyl-ACPs and long chain saturated and unsaturated beta-hydroxyacyl-ACPs. In Roseiflexus castenholzii (strain DSM 13941 / HLO8), this protein is 3-hydroxyacyl-[acyl-carrier-protein] dehydratase FabZ.